The sequence spans 349 residues: tRNA N6-adenosine threonylcarbamoyltransferase (349 aa).

Residues His-117 and His-121 each contribute to the Fe cation site. Substrate is bound by residues 140–144 (LVSGG), Asp-173, Gly-186, and Asn-284. Residue Asp-312 participates in Fe cation binding.

This sequence belongs to the KAE1 / TsaD family. It depends on Fe(2+) as a cofactor.

It is found in the cytoplasm. The catalysed reaction is L-threonylcarbamoyladenylate + adenosine(37) in tRNA = N(6)-L-threonylcarbamoyladenosine(37) in tRNA + AMP + H(+). Required for the formation of a threonylcarbamoyl group on adenosine at position 37 (t(6)A37) in tRNAs that read codons beginning with adenine. Is involved in the transfer of the threonylcarbamoyl moiety of threonylcarbamoyl-AMP (TC-AMP) to the N6 group of A37, together with TsaE and TsaB. TsaD likely plays a direct catalytic role in this reaction. In Psychrobacter arcticus (strain DSM 17307 / VKM B-2377 / 273-4), this protein is tRNA N6-adenosine threonylcarbamoyltransferase.